A 205-amino-acid chain; its full sequence is Proteasome subunit beta type-3 (205 aa).

The protein belongs to the peptidase T1B family. The 26S proteasome consists of a 20S proteasome core and two 19S regulatory subunits. The 20S proteasome core is composed of 28 subunits that are arranged in four stacked rings, resulting in a barrel-shaped structure. The two end rings are each formed by seven alpha subunits, and the two central rings are each formed by seven beta subunits. The catalytic chamber with the active sites is on the inside of the barrel.

Its subcellular location is the cytoplasm. It is found in the nucleus. Its function is as follows. Non-catalytic component of the proteasome, a multicatalytic proteinase complex which is characterized by its ability to cleave peptides with Arg, Phe, Tyr, Leu, and Glu adjacent to the leaving group at neutral or slightly basic pH. The proteasome has an ATP-dependent proteolytic activity. In Dictyostelium discoideum (Social amoeba), this protein is Proteasome subunit beta type-3 (psmB3).